The primary structure comprises 208 residues: Protein-L-isoaspartate O-methyltransferase (208 aa).

The active site involves Ser59.

This sequence belongs to the methyltransferase superfamily. L-isoaspartyl/D-aspartyl protein methyltransferase family.

The protein localises to the cytoplasm. It catalyses the reaction [protein]-L-isoaspartate + S-adenosyl-L-methionine = [protein]-L-isoaspartate alpha-methyl ester + S-adenosyl-L-homocysteine. Functionally, catalyzes the methyl esterification of L-isoaspartyl residues in peptides and proteins that result from spontaneous decomposition of normal L-aspartyl and L-asparaginyl residues. It plays a role in the repair and/or degradation of damaged proteins. In Citrobacter koseri (strain ATCC BAA-895 / CDC 4225-83 / SGSC4696), this protein is Protein-L-isoaspartate O-methyltransferase.